A 460-amino-acid polypeptide reads, in one-letter code: MFTIKLLLFIVPLVISSRIDQDNSSFDSLSPEPKSRFAMLDDVKILANGLLQLGHGLKDFVHKTKGQINDIFQKLNIFDQSFYDLSLQTSEIKEEEKELRRTTYKLQVKNEEVKNMSLELNSKLESLLEEKILLQQKVKYLEEQLTNLIQNQPETPEHPEVTSLKTFVEKQDNSIKDLLQTVEDQYKQLNQQHSQIKEIENQLRRTSIQEPTEISLSSKPRAPRTTPFLQLNEIRNVKHDGIPAECTTIYNRGEHTSGMYAIRPSNSQVFHVYCDVISGSPWTLIQHRIDGSQNFNETWENYKYGFGRLDGEFWLGLEKIYSIVKQSNYVLRIELEDWKDNKHYIEYSFYLGNHETNYTLHLVAITGNVPNAIPENKDLVFSTWDHKAKGHFNCPEGYSGGWWWHDECGENNLNGKYNKPRAKSKPERRRGLSWKSQNGRLYSIKSTKMLIHPTDSESFE.

Residues 1–16 (MFTIKLLLFIVPLVIS) form the signal peptide. The segment at 17 to 165 (SRIDQDNSSF…PEHPEVTSLK (149 aa)) is sufficient to inhibit LPL lipase activity. The tract at residues 17–207 (SRIDQDNSSF…EIENQLRRTS (191 aa)) is sufficient to inhibit LIPG/EL phospholipase activity. Positions 32-56 (EPKSRFAMLDDVKILANGLLQLGHG) are required for inhibition of LPL lipase activity. Positions 85–210 (LSLQTSEIKE…NQLRRTSIQE (126 aa)) form a coiled coil. Asparagine 115 is a glycosylation site (N-linked (GlcNAc...) asparagine). A glycan (O-linked (GalNAc) threonine) is linked at threonine 226. The region spanning 237–455 (VKHDGIPAEC…STKMLIHPTD (219 aa)) is the Fibrinogen C-terminal domain. An intrachain disulfide couples cysteine 246 to cysteine 274. N-linked (GlcNAc...) asparagine glycosylation is found at asparagine 296 and asparagine 357. The cysteines at positions 394 and 408 are disulfide-linked.

As to quaternary structure, interacts with ANGPTL8. Interacts with ITGB3. In terms of processing, O-glycosylated at Thr-226 by GALNT2; blocks processing and activation by proprotein convertases. In part proteolytically cleaved by proprotein convertases; proposed to be involved in activation. In terms of tissue distribution, expressed principally in liver. Weakly expressed in kidney. Binds to adipocytes. Increased expression and colocalization with activated ITGB3 in glomeruli of patients with nephrotic syndrome showing effaced podocyte foot processes (at protein level).

Its subcellular location is the secreted. It is found in the cell projection. The protein localises to the lamellipodium. Its function is as follows. Acts in part as a hepatokine that is involved in regulation of lipid and glucose metabolism. Proposed to play a role in the trafficking of energy substrates to either storage or oxidative tissues in response to food intake. Has a stimulatory effect on plasma triglycerides (TG), which is achieved by suppressing plasma TG clearance via inhibition of LPL activity. The inhibition of LPL activity appears to be an indirect mechanism involving recruitment of proprotein convertases PCSK6 and FURIN to LPL leading to cleavage and dissociation of LPL from the cell surface; the function does not require ANGPTL3 proteolytic cleavage but seems to be mediated by the N-terminal domain, and is not inhibited by GPIHBP1. Can inhibit endothelial lipase, causing increased plasma levels of high density lipoprotein (HDL) cholesterol and phospholipids. Can bind to adipocytes to activate lipolysis, releasing free fatty acids and glycerol. Suppresses LPL specifically in oxidative tissues which is required to route very low density lipoprotein (VLDL)-TG to white adipose tissue (WAT) for storage in response to food; the function may involve cooperation with circulating, liver-derived ANGPTL8 and ANGPTL4 expression in WAT. Contributes to lower plasma levels of low density lipoprotein (LDL)-cholesterol by a mechanism that is independent of the canonical pathway implicating APOE and LDLR. May stimulate hypothalamic LPL activity. In terms of biological role, in vitro inhibits LPL activity; not effective on GPIHBP1-stabilized LPL. Functionally, involved in angiogenesis. Binds to endothelial cells via integrin alpha-V/beta-3 (ITGAV:ITGB3), activates FAK, MAPK and Akt signaling pathways and induces cell adhesion and cell migration. Secreted from podocytes, may modulate properties of glomerular endothelial cells involving integrin alpha-V/beta-3 and Akt signaling. May increase the motility of podocytes. May induce actin filament rearrangements in podocytes implicating integrin alpha-V/beta-3 and Rac1 activation. Binds to hematopoietic stem cells (HSC) and is involved in the regulation of HSC activity probably implicating down-regulation of IKZF1/IKAROS. In Homo sapiens (Human), this protein is Angiopoietin-related protein 3 (ANGPTL3).